A 123-amino-acid polypeptide reads, in one-letter code: Large ribosomal subunit protein uL14 (123 aa).

Belongs to the universal ribosomal protein uL14 family. As to quaternary structure, part of the 50S ribosomal subunit. Forms a cluster with proteins L3 and L19. In the 70S ribosome, L14 and L19 interact and together make contacts with the 16S rRNA in bridges B5 and B8.

Functionally, binds to 23S rRNA. Forms part of two intersubunit bridges in the 70S ribosome. This is Large ribosomal subunit protein uL14 from Citrobacter koseri (strain ATCC BAA-895 / CDC 4225-83 / SGSC4696).